Here is a 700-residue protein sequence, read N- to C-terminus: Elongation factor G (700 aa).

The 283-residue stretch at 8–290 (ERYRNIGISA…AVIDYLPAPT (283 aa)) folds into the tr-type G domain. GTP-binding positions include 17–24 (AHIDAGKT), 88–92 (DTPGH), and 142–145 (NKMD).

Belongs to the TRAFAC class translation factor GTPase superfamily. Classic translation factor GTPase family. EF-G/EF-2 subfamily.

Its subcellular location is the cytoplasm. In terms of biological role, catalyzes the GTP-dependent ribosomal translocation step during translation elongation. During this step, the ribosome changes from the pre-translocational (PRE) to the post-translocational (POST) state as the newly formed A-site-bound peptidyl-tRNA and P-site-bound deacylated tRNA move to the P and E sites, respectively. Catalyzes the coordinated movement of the two tRNA molecules, the mRNA and conformational changes in the ribosome. The chain is Elongation factor G from Glaesserella parasuis serovar 5 (strain SH0165) (Haemophilus parasuis).